Reading from the N-terminus, the 661-residue chain is Zeaxanthin epoxidase, chloroplastic (661 aa).

The transit peptide at 1–50 (MASTLFYNSMNLSAAVFSRTHFPIPINKDFPLEFSPCIHTDYHLRSRTRS) directs the protein to the chloroplast. FAD-binding positions include 82 to 110 (RILV…VVFE) and 360 to 373 (ILTW…LLGD). One can recognise an FHA domain in the interval 558-607 (CIIGSAPHGDVSGISIAIPKPQVSEMHARISYKDGAFYLTDLRSEHGTWI).

It depends on FAD as a cofactor.

It localises to the plastid. Its subcellular location is the chloroplast. It carries out the reaction all-trans-zeaxanthin + 4 reduced [2Fe-2S]-[ferredoxin] + 2 O2 + 4 H(+) = all-trans-violaxanthin + 4 oxidized [2Fe-2S]-[ferredoxin] + 2 H2O. Its pathway is plant hormone biosynthesis; abscisate biosynthesis. Functionally, converts zeaxanthin into antheraxanthin and subsequently violaxanthin. Involved in the epoxidation of zeaxanthin. The chain is Zeaxanthin epoxidase, chloroplastic from Prunus armeniaca (Apricot).